Consider the following 737-residue polypeptide: MAQYALEAGVSWLATSVSVVASGTWQFAKWTHKYVMQQAEELEADEPEESYFQQMVDKEKEFHNYVRQQIICMWLFMLLYLFAYWLISRLKRKTEREALYAGEEDYFVYRVSVWISSTATATSIGSLTLLPFSVIGVELLQLYDGNYYLQWLSYSLIGALWNYVFVLSNVSLFVLLPFSYFFIESQGFSTSKIGNDMTQRIYEAMAISFLFAFVLLCLAEVVLTILDYPVSFLSITSVNLPLIYSCVSFIGAVLLLISTPYGFAKMFSLARDFLVTEETADIEEENSEQSEDVTEPKNSSSDETIHQVDRSDTPHLEDVVNDITENVDADGEFRKDSDSGIESGSTEEMRLNTDDEEMGINDSDDKSAFGDDGDLGNSTPTKNKKKRRKHDYAATTPIVRKWDKDVPKKPKNPNFDYRNLKEYVKEARRQRSSLSESDDYWFGSPPRSSFSANYYSSRFSRWKHNSETGLNPSSSLLVDPFASGDFHEASSSEASSTPLSPARRTKSEEAIWKPVLHTVKSSKLYKRAIEKQGRLVKLFMSLRFPVAAAALLVLTTCSLIMVATNTLKLLFGYRSLPVYAQYIEVHTRHSFGLFGACIETLLIIYVMITSFVGLYSLPVLRSLRPVRKDTPMPTIIINSSIVLVVASALPVAVNTVGMTTFDLLGSHSSLQWLGSFRVVVAYNTLFVVLSVAFLFNQLTASMRRQIWKWICQLRCGIRRESDADETIEILRGDKKSN.

Acidic residues predominate over residues 280 to 293 (ADIEEENSEQSEDV). Residues 280–416 (ADIEEENSEQ…PKKPKNPNFD (137 aa)) are disordered. Positions 303–318 (ETIHQVDRSDTPHLED) are enriched in basic and acidic residues.

It belongs to the LIMR family.

The protein is LIMR family protein R05D3.2 of Caenorhabditis elegans.